The primary structure comprises 381 residues: 6-oxocyclohex-1-ene-1-carbonyl-CoA hydrolase (381 aa).

Belongs to the enoyl-CoA hydratase/isomerase family. As to quaternary structure, homohexamer.

The catalysed reaction is 6-oxocyclohex-1-ene-1-carbonyl-CoA + 2 H2O = 3-hydroxy-6-carboxyhexanoyl-CoA + H(+). The protein operates within aromatic compound metabolism; benzoyl-CoA degradation. Its function is as follows. Involved in the central benzoyl-CoA catabolism. Catalyzes the addition of one molecule of water to the double bond and the hydrolytic cleavage of C-C bond in the alicyclic ring, 6-oxocyclohex-1-ene-1-carbonyl-CoA (6-OCH-CoA) to yield 3-hydroxypimelyl-CoA. The protein is 6-oxocyclohex-1-ene-1-carbonyl-CoA hydrolase of Geobacter metallireducens (strain ATCC 53774 / DSM 7210 / GS-15).